The following is a 582-amino-acid chain: uncharacterized protein (582 aa).

Helical transmembrane passes span 17-37 (VAMLMMLQLVSTLASLYLPTV), 57-77 (LGAVMLGVTGLQVLCAIGAVY), 131-151 (MTATVLVTAPIMCVGGIIMAI), 156-176 (ALTWLLLVSVPILAVANYWII), 239-259 (ALMLPVTTLTINASSVALIWF), and 271-291 (VGSLIAFLSYFAQILMAVLMA). The ABC transmembrane type-1 domain occupies 17-300 (VAMLMMLQLV…ATMTLAVLPR (284 aa)). The region spanning 335-571 (VRLAGATFTY…CPTYAEFAAS (237 aa)) is the ABC transporter domain. Residue 369-376 (GSTGSGKS) coordinates ATP.

This sequence belongs to the ABC transporter superfamily.

It localises to the cell membrane. This is an uncharacterized protein from Mycobacterium tuberculosis (strain CDC 1551 / Oshkosh).